A 69-amino-acid chain; its full sequence is DNA-directed RNA polymerase subunit epsilon (69 aa).

The protein belongs to the RNA polymerase subunit epsilon family. As to quaternary structure, RNAP is composed of a core of 2 alpha, a beta and a beta' subunit. The core is associated with a delta subunit, and at least one of epsilon or omega. When a sigma factor is associated with the core the holoenzyme is formed, which can initiate transcription.

It catalyses the reaction RNA(n) + a ribonucleoside 5'-triphosphate = RNA(n+1) + diphosphate. Functionally, a non-essential component of RNA polymerase (RNAP). The polypeptide is DNA-directed RNA polymerase subunit epsilon (Shouchella clausii (strain KSM-K16) (Alkalihalobacillus clausii)).